The following is a 412-amino-acid chain: Multifunctional CCA protein (412 aa).

Positions 8 and 11 each coordinate ATP. CTP-binding residues include glycine 8 and arginine 11. Residues glutamate 21 and aspartate 23 each contribute to the Mg(2+) site. The ATP site is built by arginine 91, arginine 137, and arginine 140. Residues arginine 91, arginine 137, and arginine 140 each coordinate CTP. The region spanning 228–329 (CGIHTLMSLQ…WRLLQRLDVL (102 aa)) is the HD domain.

The protein belongs to the tRNA nucleotidyltransferase/poly(A) polymerase family. Bacterial CCA-adding enzyme type 1 subfamily. Monomer. Can also form homodimers and oligomers. The cofactor is Mg(2+). It depends on Ni(2+) as a cofactor.

It carries out the reaction a tRNA precursor + 2 CTP + ATP = a tRNA with a 3' CCA end + 3 diphosphate. It catalyses the reaction a tRNA with a 3' CCA end + 2 CTP + ATP = a tRNA with a 3' CCACCA end + 3 diphosphate. Its function is as follows. Catalyzes the addition and repair of the essential 3'-terminal CCA sequence in tRNAs without using a nucleic acid template. Adds these three nucleotides in the order of C, C, and A to the tRNA nucleotide-73, using CTP and ATP as substrates and producing inorganic pyrophosphate. tRNA 3'-terminal CCA addition is required both for tRNA processing and repair. Also involved in tRNA surveillance by mediating tandem CCA addition to generate a CCACCA at the 3' terminus of unstable tRNAs. While stable tRNAs receive only 3'-terminal CCA, unstable tRNAs are marked with CCACCA and rapidly degraded. The sequence is that of Multifunctional CCA protein from Acinetobacter baumannii (strain ATCC 17978 / DSM 105126 / CIP 53.77 / LMG 1025 / NCDC KC755 / 5377).